We begin with the raw amino-acid sequence, 147 residues long: Putative pre-16S rRNA nuclease (147 aa).

This sequence belongs to the YqgF nuclease family.

It is found in the cytoplasm. Its function is as follows. Could be a nuclease involved in processing of the 5'-end of pre-16S rRNA. This chain is Putative pre-16S rRNA nuclease, found in Ligilactobacillus salivarius (strain UCC118) (Lactobacillus salivarius).